The sequence spans 87 residues: Small ribosomal subunit protein bS20 (87 aa).

Positions 1 to 22 are disordered; sequence MANIKSQIKRIGTNKKAQERNK.

Belongs to the bacterial ribosomal protein bS20 family.

Its function is as follows. Binds directly to 16S ribosomal RNA. The sequence is that of Small ribosomal subunit protein bS20 from Clavibacter michiganensis subsp. michiganensis (strain NCPPB 382).